We begin with the raw amino-acid sequence, 123 residues long: Large ribosomal subunit protein uL14c (123 aa).

The protein belongs to the universal ribosomal protein uL14 family. Part of the 50S ribosomal subunit.

The protein resides in the plastid. Its subcellular location is the chloroplast. Functionally, binds to 23S rRNA. The chain is Large ribosomal subunit protein uL14c from Triticum aestivum (Wheat).